We begin with the raw amino-acid sequence, 490 residues long: ATP synthase subunit beta, chloroplastic (490 aa).

170-177 contacts ATP; that stretch reads GGAGVGKT.

Belongs to the ATPase alpha/beta chains family. F-type ATPases have 2 components, CF(1) - the catalytic core - and CF(0) - the membrane proton channel. CF(1) has five subunits: alpha(3), beta(3), gamma(1), delta(1), epsilon(1). CF(0) has four main subunits: a(1), b(1), b'(1) and c(9-12).

The protein localises to the plastid. It is found in the chloroplast thylakoid membrane. It carries out the reaction ATP + H2O + 4 H(+)(in) = ADP + phosphate + 5 H(+)(out). Produces ATP from ADP in the presence of a proton gradient across the membrane. The catalytic sites are hosted primarily by the beta subunits. In Ipomoea obscura (Obscure morning glory), this protein is ATP synthase subunit beta, chloroplastic.